A 283-amino-acid chain; its full sequence is Thymidylate synthase (283 aa).

Residue Arg-22 participates in dUMP binding. Residue Cys-160 is the Nucleophile of the active site. DUMP contacts are provided by residues 180–183, Asn-191, and 221–223; these read RSAD and HIY. Asp-183 is a binding site for (6R)-5,10-methylene-5,6,7,8-tetrahydrofolate. Position 282 (Ser-282) interacts with (6R)-5,10-methylene-5,6,7,8-tetrahydrofolate.

Belongs to the thymidylate synthase family. Bacterial-type ThyA subfamily. Homodimer.

Its subcellular location is the cytoplasm. The catalysed reaction is dUMP + (6R)-5,10-methylene-5,6,7,8-tetrahydrofolate = 7,8-dihydrofolate + dTMP. It functions in the pathway pyrimidine metabolism; dTTP biosynthesis. In terms of biological role, catalyzes the reductive methylation of 2'-deoxyuridine-5'-monophosphate (dUMP) to 2'-deoxythymidine-5'-monophosphate (dTMP) while utilizing 5,10-methylenetetrahydrofolate (mTHF) as the methyl donor and reductant in the reaction, yielding dihydrofolate (DHF) as a by-product. This enzymatic reaction provides an intracellular de novo source of dTMP, an essential precursor for DNA biosynthesis. This chain is Thymidylate synthase, found in Glaesserella parasuis serovar 5 (strain SH0165) (Haemophilus parasuis).